The primary structure comprises 484 residues: Endoglucanase 3 (484 aa).

Positions 1–21 are cleaved as a signal peptide; sequence MASPFFFVFLLSALSLENTYA. D77 acts as the Nucleophile in catalysis. N370 carries N-linked (GlcNAc...) asparagine glycosylation. Residues H402, D453, and E462 contribute to the active site.

Belongs to the glycosyl hydrolase 9 (cellulase E) family. In terms of tissue distribution, specifically expressed in root cap cells.

It is found in the secreted. The enzyme catalyses Endohydrolysis of (1-&gt;4)-beta-D-glucosidic linkages in cellulose, lichenin and cereal beta-D-glucans.. Functionally, may be involved in the sloughing (cell-cell separation) of the root cap cells from root tip. The chain is Endoglucanase 3 (CEL5) from Arabidopsis thaliana (Mouse-ear cress).